We begin with the raw amino-acid sequence, 345 residues long: Ninja-family protein AFP1 (345 aa).

Disordered regions lie at residues 114–185 and 201–256; these read TSLP…ATAN and QVSG…RRLS. 2 stretches are compositionally biased toward basic and acidic residues: residues 123-132 and 222-232; these read EWRKRKEMQT and LETKASSDEAR. The span at 235-249 shows a compositional bias: low complexity; sequence PSTTQPQQETTTKPT.

The protein belongs to the Ninja family. Forms a heterodimer with AFP2. Interacts with ABI5/DPBF1, DPBF2, AREB3/DPBF3, ABF1, ABF3/DPBF5 and ABF4/AREB2.

Its subcellular location is the nucleus. Its function is as follows. Acts as a negative regulator of abscisic acid (ABA) response during germination through the ubiquitin-mediated proteolysis of ABI5/DPBF1. The protein is Ninja-family protein AFP1 (AFP1) of Arabidopsis thaliana (Mouse-ear cress).